The chain runs to 295 residues: DQEIVVKSMAMEKVYELACRVADSDATIFLQGETGVGKEVLARTIHNSSIRKEAPFIKVNCGAIPESIMESELFGYSKGTFTGGNKDGKKGLAQAAHNGTLFLDEIGELPLNLQAKLLQLLNEKQFTPLGEIKPVQVDVRFIAATNRNLEDMVREGTFREDLYYRLFVIPITIPSLSERREDIPFLINHFLETFNHKYKLYKTIDKEVVQFFIDYEWKGNVRELQNTIERLVLISSAQQIELSDLSDKFKKATSHTKGGISGEGLNLKQKMEQFEKQILIQTLESSNTMKEASKN.

In terms of domain architecture, Sigma-54 factor interaction spans Ile4–Leu233.

This is an uncharacterized protein from Pseudomonas sp. (strain NS671).